The primary structure comprises 387 residues: MNLNDDDDNYNSAIVIDNGSYLCKAGFGGEESPRAIFRSVVGRPNFCTRGVKNGMGQKDCYVGDEAIVKKSILSLKCPNESKSPVNWDDIEKILHHVFYNELRVTIDKGVLLSEIPLNPKENRERITQIMFETFDTPNFYLANQSVLSLYSKGRLNGIVLDSGNNITYTVPIYEGHSIPNSINQLEIAGNSVTEYLMKILNENRGYNFTTSSEKEIVKDIKEKFGFISLNYNNDLYSTKVATNEIEKSYQLPDGQMITIGKERFICGEVLFEPSLVNIESYGVHQLLYNSIINCDFEIRRGLYNNIILSGGTTMLPDFNDRIKNELINLSPSSMKIKVVENNTNENNSHLAWIGGSIFSSLSTFEQQSISKQEYMEYGSKIIQRKCF.

It belongs to the actin family.

Its subcellular location is the cytoplasm. It is found in the cytoskeleton. It catalyses the reaction ATP + H2O = ADP + phosphate + H(+). Its function is as follows. Actins are highly conserved proteins that are involved in various types of cell motility and are ubiquitously expressed in all eukaryotic cells. Multiple isoforms are involved in various cellular functions such as cytoskeleton structure, cell mobility, chromosome movement and muscle contraction. The protein is Putative actin-29 (act29) of Dictyostelium discoideum (Social amoeba).